A 245-amino-acid chain; its full sequence is Bax inhibitor 1 (245 aa).

Topologically, residues 1 to 30 (MADTANYINDRFQTFMNGLGDRYEPYVREH) are cytoplasmic. Residues 31–51 (LSKVYMVLGSTAAATAMGAML) traverse the membrane as a helical segment. The Lumenal portion of the chain corresponds to 52–55 (QMRD). A helical membrane pass occupies residues 56-76 (FLDLGVLAAVATLVLVLGLHF). Topologically, residues 77-88 (YKDDGKNYYTRL) are cytoplasmic. A helical membrane pass occupies residues 89-109 (GMLYAFGFCSGQTLGPLLGYI). The Lumenal portion of the chain corresponds to 110-115 (CSINPA). Residues 116–136 (IILSALTGTFVTFISLSLSAL) form a helical membrane-spanning segment. The Cytoplasmic portion of the chain corresponds to 137–142 (LAEQGK). The helical transmembrane segment at 143–163 (YLYLGGMLVSVINTMALLSLF) threads the bilayer. Residues 164 to 169 (NMVFKS) lie on the Lumenal side of the membrane. The helical transmembrane segment at 170–190 (YFVQVTQLYVGVFVMAAFIVY) threads the bilayer. Topologically, residues 191–245 (DTQNIVEKCRNGNRDVVQHALDLFFDVLSMFRRLLIILTQKEERKQNERRQNKTK) are cytoplasmic.

The protein belongs to the BI1 family.

The protein localises to the endoplasmic reticulum membrane. In terms of biological role, suppressor of apoptosis. Modulates unfolded protein response signaling. Negatively regulates autophagy and autophagosome formation, especially during periods of nutrient deprivation, and reduces cell survival during starvation. This Drosophila melanogaster (Fruit fly) protein is Bax inhibitor 1.